The following is a 233-amino-acid chain: tRNA (guanine-N(7)-)-methyltransferase (233 aa).

S-adenosyl-L-methionine is bound by residues glutamate 62, glutamate 87, aspartate 116, and aspartate 138. Residue aspartate 138 is part of the active site. Substrate is bound by residues lysine 142, aspartate 174, and 212-215 (TRYE).

Belongs to the class I-like SAM-binding methyltransferase superfamily. TrmB family.

It carries out the reaction guanosine(46) in tRNA + S-adenosyl-L-methionine = N(7)-methylguanosine(46) in tRNA + S-adenosyl-L-homocysteine. It functions in the pathway tRNA modification; N(7)-methylguanine-tRNA biosynthesis. In terms of biological role, catalyzes the formation of N(7)-methylguanine at position 46 (m7G46) in tRNA. This chain is tRNA (guanine-N(7)-)-methyltransferase, found in Bartonella henselae (strain ATCC 49882 / DSM 28221 / CCUG 30454 / Houston 1) (Rochalimaea henselae).